Consider the following 486-residue polypeptide: Histamine H1 receptor (486 aa).

Topologically, residues 1–29 (MSFANTSSTFEDKMCEGNRTAMASPQLLP) are extracellular. 2 N-linked (GlcNAc...) asparagine glycosylation sites follow: asparagine 5 and asparagine 18. A helical membrane pass occupies residues 30–50 (LVVVLSSISLVTVGLNLLVLY). Residues 51–64 (AVHSERKLHTVGNL) are Cytoplasmic-facing. The chain crosses the membrane as a helical span at residues 65–89 (YIVSLSVADLIVGAVVMPMNILYLI). Residues 90 to 97 (MTKWSLGR) are Extracellular-facing. The chain crosses the membrane as a helical span at residues 98–123 (PLCLFWLSMDYVASTASIFSVFILCI). Cysteine 100 and cysteine 180 are joined by a disulfide. Residues aspartate 107 and threonine 112 each coordinate histamine. The segment at 107–112 (DYVAST) is important for agonist binding. At 124-144 (DRYRSVQQPLRYLRYRTKTRA) the chain is on the cytoplasmic side. Threonine 140 and threonine 142 each carry phosphothreonine. The helical transmembrane segment at 145 to 164 (SATILGAWFFSFLWVIPILG) threads the bilayer. The Extracellular segment spans residues 165–188 (WHHFMPPAPELREDKCETDFYNVT). A helical membrane pass occupies residues 189 to 211 (WFKIMTAIINFYLPTLLMLWFYV). Asparagine 198 contacts histamine. Residues 212–415 (KIYKAVRRHC…LNRERKAAKQ (204 aa)) lie on the Cytoplasmic side of the membrane. A Phosphoserine modification is found at serine 230. Over residues 241 to 253 (SDDTKEGAKKPGR) the composition is skewed to basic and acidic residues. Disordered stretches follow at residues 241-295 (SDDT…GERE) and 310-379 (VAEG…RSGS). Phosphoserine occurs at positions 342 and 345. The segment covering 347–365 (DQTLVDQQSFSRTTDSDTS) has biased composition (polar residues). Phosphoserine is present on residues serine 379, serine 381, serine 395, and serine 397. The chain crosses the membrane as a helical span at residues 416 to 439 (LGFIMAAFILCWIPYFIFFMVIAF). The tract at residues 423–427 (FILCW) is important for agonist binding. Tyrosine 430 lines the histamine pocket. Cysteine 440 and cysteine 443 are disulfide-bonded. Residues 440 to 445 (CKSCCS) lie on the Extracellular side of the membrane. The chain crosses the membrane as a helical span at residues 446–468 (EPMHMFTIWLGYINSTLNPLIYP). Residues 469-486 (LCNENFKKTFKKILHIRS) lie on the Cytoplasmic side of the membrane.

This sequence belongs to the G-protein coupled receptor 1 family. Post-translationally, phosphorylation at sites in the second and third cytoplasmic loops independently contribute to agonist-induced receptor down-regulation.

It localises to the cell membrane. Functionally, G-protein-coupled receptor for histamine, a biogenic amine that functions as an immune modulator and a neurotransmitter. Through the H1 receptor, histamine mediates the contraction of smooth muscles and increases capillary permeability due to contraction of terminal venules. Also mediates neurotransmission in the central nervous system and thereby regulates circadian rhythms, emotional and locomotor activities as well as cognitive functions. This is Histamine H1 receptor from Rattus norvegicus (Rat).